A 166-amino-acid polypeptide reads, in one-letter code: ATP synthase subunit b (166 aa).

The chain crosses the membrane as a helical span at residues 27 to 47 (FFVVLLIFLIVLGVIAKWVVP). Positions 124 to 143 (SADQQLSQQGSAAQSELQSS) are disordered.

This sequence belongs to the ATPase B chain family. F-type ATPases have 2 components, F(1) - the catalytic core - and F(0) - the membrane proton channel. F(1) has five subunits: alpha(3), beta(3), gamma(1), delta(1), epsilon(1). F(0) has three main subunits: a(1), b(2) and c(10-14). The alpha and beta chains form an alternating ring which encloses part of the gamma chain. F(1) is attached to F(0) by a central stalk formed by the gamma and epsilon chains, while a peripheral stalk is formed by the delta and b chains.

It localises to the cell membrane. F(1)F(0) ATP synthase produces ATP from ADP in the presence of a proton or sodium gradient. F-type ATPases consist of two structural domains, F(1) containing the extramembraneous catalytic core and F(0) containing the membrane proton channel, linked together by a central stalk and a peripheral stalk. During catalysis, ATP synthesis in the catalytic domain of F(1) is coupled via a rotary mechanism of the central stalk subunits to proton translocation. Functionally, component of the F(0) channel, it forms part of the peripheral stalk, linking F(1) to F(0). This is ATP synthase subunit b from Mycolicibacterium vanbaalenii (strain DSM 7251 / JCM 13017 / BCRC 16820 / KCTC 9966 / NRRL B-24157 / PYR-1) (Mycobacterium vanbaalenii).